The sequence spans 442 residues: D-serine dehydratase (442 aa).

The residue at position 118 (lysine 118) is an N6-(pyridoxal phosphate)lysine.

Belongs to the serine/threonine dehydratase family. DsdA subfamily. As to quaternary structure, monomer. Pyridoxal 5'-phosphate is required as a cofactor.

The catalysed reaction is D-serine = pyruvate + NH4(+). In Escherichia coli O139:H28 (strain E24377A / ETEC), this protein is D-serine dehydratase.